We begin with the raw amino-acid sequence, 151 residues long: Ribosome-binding factor A (151 aa).

The tract at residues 116-151 is disordered; the sequence is DAEVARAAANARPAGDPDPYREPRPADDDDEDDEDE. Residues 120–129 show a composition bias toward low complexity; that stretch reads ARAAANARPA. Residues 142 to 151 are compositionally biased toward acidic residues; it reads DDDDEDDEDE.

It belongs to the RbfA family. Monomer. Binds 30S ribosomal subunits, but not 50S ribosomal subunits or 70S ribosomes.

The protein localises to the cytoplasm. One of several proteins that assist in the late maturation steps of the functional core of the 30S ribosomal subunit. Associates with free 30S ribosomal subunits (but not with 30S subunits that are part of 70S ribosomes or polysomes). Required for efficient processing of 16S rRNA. May interact with the 5'-terminal helix region of 16S rRNA. The sequence is that of Ribosome-binding factor A from Thermobifida fusca (strain YX).